The sequence spans 77 residues: Translation initiation factor IF-1, chloroplastic (77 aa).

An S1-like domain is found at 1–71; that stretch reads MKEQKWIHEG…TRGRIIYRLR (71 aa).

It belongs to the IF-1 family. In terms of assembly, component of the 30S ribosomal translation pre-initiation complex which assembles on the 30S ribosome in the order IF-2 and IF-3, IF-1 and N-formylmethionyl-tRNA(fMet); mRNA recruitment can occur at any time during PIC assembly.

It localises to the plastid. It is found in the chloroplast. One of the essential components for the initiation of protein synthesis. Stabilizes the binding of IF-2 and IF-3 on the 30S subunit to which N-formylmethionyl-tRNA(fMet) subsequently binds. Helps modulate mRNA selection, yielding the 30S pre-initiation complex (PIC). Upon addition of the 50S ribosomal subunit IF-1, IF-2 and IF-3 are released leaving the mature 70S translation initiation complex. This chain is Translation initiation factor IF-1, chloroplastic, found in Antirrhinum majus (Garden snapdragon).